The primary structure comprises 988 residues: Voltage-gated delayed rectifier potassium channel KCNH5 (988 aa).

The Cytoplasmic portion of the chain corresponds to 1–217 (MPGGKRGLVA…LHYCAFKTTW (217 aa)). The PAS domain occupies 14–86 (TFLENIVRRS…TIEKVRQTFD (73 aa)). The 53-residue stretch at 91-143 (NCFEVLLYKKNRTPVWFYMQIAPIRNEHEKVVLFLCTFKDITLFKQPIEDDST) folds into the PAC domain. The chain crosses the membrane as a helical span at residues 218 to 238 (DWVILILTFYTAIMVPYNVSF). The Extracellular portion of the chain corresponds to 239-243 (KTKQN). A helical transmembrane segment spans residues 244-264 (NIAWLVLDSVVDVIFLVDIVL). Topologically, residues 265–291 (NFHTTFVGPGGEVISDPKLIRMNYLKT) are cytoplasmic. The chain crosses the membrane as a helical span at residues 292–312 (WFVIDLLSCLPYDIINAFENV). Residues 313–319 (DEGISSL) lie on the Extracellular side of the membrane. A helical; Voltage-sensor transmembrane segment spans residues 320–340 (FSSLKVVRLLRLGRVARKLDH). Topologically, residues 341 to 346 (YLEYGA) are cytoplasmic. The helical transmembrane segment at 347–367 (AVLVLLVCVFGLVAHWLACIW) threads the bilayer. Residues 368–419 (YSIGDYEVIDEVTNTIQIDSWLYQLALSIGTPYRYNTSAGIWEGGPSKDSLY) lie on the Extracellular side of the membrane. The N-linked (GlcNAc...) asparagine glycan is linked to asparagine 403. Residues 420-440 (VSSLYFTMTSLTTIGFGNIAP) constitute an intramembrane region (pore-forming). Positions 432–437 (TIGFGN) match the Selectivity filter motif. The Extracellular segment spans residues 441 to 446 (TTDVEK). A helical membrane pass occupies residues 447-467 (MFSVAMMMVGSLLYATIFGNV). The Cytoplasmic portion of the chain corresponds to 468 to 988 (TTIFQQMYAN…PESDKDEINF (521 aa)). Residue 550–668 (AFRLASDGCL…SFSRNLTLTC (119 aa)) participates in a nucleoside 3',5'-cyclic phosphate binding. The segment at 704 to 715 (HPVRKLFQKFKQ) is calmodulin-binding. Residues 721 to 741 (IQGSAQSDPERSQLQVESRPL) form a disordered region. Over residues 723–741 (GSAQSDPERSQLQVESRPL) the composition is skewed to polar residues. A Glycyl lysine isopeptide (Lys-Gly) (interchain with G-Cter in ubiquitin) cross-link involves residue lysine 785. Residues 838–893 (GLLSEDPKGSDSENSVTKNPLRKTDSCDSGITKSDLRLDKAGEARSPLEHSPSQAD) are disordered. Positions 871–885 (SDLRLDKAGEARSPL) are enriched in basic and acidic residues. Serine 883 carries the post-translational modification Phosphoserine. The tract at residues 909-948 (TLQEVKHELKEDIQLLSCRMTALEKQVAEILKLLSEKSVP) is CAD (involved in subunit assembly).

It belongs to the potassium channel family. H (Eag) (TC 1.A.1.20) subfamily. Kv10.2/KCNH5 sub-subfamily. Homotetramer. The potassium channel is probably composed of a homo- or heterotetrameric complex of pore-forming alpha subunits that can associate with modulating beta subunits. Heteromultimer with KCNH1/EAG.

It localises to the membrane. It carries out the reaction K(+)(in) = K(+)(out). Its function is as follows. Pore-forming (alpha) subunit of a voltage-gated delayed rectifier potassium channel that mediates outward-rectifying potassium currents which, on depolarization, reaches a steady-state level and do not inactivate. The kinetic is characterized by a slow activation time course and a small voltage dependence of the activation time constants, therefore, starts to open at more negative voltages. The activation kinetics depend on the prepulse potential and external divalent cation concentration. The time course of activation is biphasic with a fast and a slowly activating current component. With negative prepulses, the current activation is delayed and slowed down several fold, whereas more positive prepulses speed up activation, therefore the activation rate depends on holding potential. The polypeptide is Voltage-gated delayed rectifier potassium channel KCNH5 (Mus musculus (Mouse)).